The primary structure comprises 114 residues: Iron-sulfur cluster insertion protein ErpA (114 aa).

Iron-sulfur cluster contacts are provided by cysteine 42, cysteine 106, and cysteine 108.

Belongs to the HesB/IscA family. In terms of assembly, homodimer. Requires iron-sulfur cluster as cofactor.

Its function is as follows. Required for insertion of 4Fe-4S clusters for at least IspG. The sequence is that of Iron-sulfur cluster insertion protein ErpA from Hamiltonella defensa subsp. Acyrthosiphon pisum (strain 5AT).